The chain runs to 461 residues: Homocitrate synthase (461 aa).

The region spanning V4–Q259 is the Pyruvate carboxyltransferase domain. R12 contributes to the 2-oxoglutarate binding site. E13 is a binding site for Mg(2+). 2-oxoglutarate contacts are provided by H76, R136, and T170. Mg(2+) is bound by residues H198 and H200. H292 (proton acceptor) is an active-site residue.

It belongs to the alpha-IPM synthase/homocitrate synthase family. Homocitrate synthase LYS20/LYS21 subfamily. Requires Mg(2+) as cofactor. The cofactor is Mn(2+).

It catalyses the reaction acetyl-CoA + 2-oxoglutarate + H2O = (2R)-homocitrate + CoA + H(+). It participates in amino-acid biosynthesis; L-lysine biosynthesis via AAA pathway; L-alpha-aminoadipate from 2-oxoglutarate: step 1/5. Catalyzes the aldol-type condensation of 2-oxoglutarate with acetyl-CoA to yield homocitrate. Carries out the first step of the alpha-aminoadipate (AAA) lysine biosynthesis pathway. This chain is Homocitrate synthase, found in Saccharolobus islandicus (strain L.S.2.15 / Lassen #1) (Sulfolobus islandicus).